Here is a 458-residue protein sequence, read N- to C-terminus: Tyrosine phenol-lyase (458 aa).

Lys-258 is subject to N6-(pyridoxal phosphate)lysine.

It belongs to the beta-eliminating lyase family. As to quaternary structure, homotetramer. Requires pyridoxal 5'-phosphate as cofactor.

It catalyses the reaction L-tyrosine + H2O = phenol + pyruvate + NH4(+). This chain is Tyrosine phenol-lyase (tpl), found in Symbiobacterium sp. (strain SC-1).